The primary structure comprises 527 residues: 4-alpha-glucanotransferase (527 aa).

The protein belongs to the disproportionating enzyme family.

Its subcellular location is the cytoplasm. It carries out the reaction Transfers a segment of a (1-&gt;4)-alpha-D-glucan to a new position in an acceptor, which may be glucose or a (1-&gt;4)-alpha-D-glucan.. The chain is 4-alpha-glucanotransferase (malQ) from Chlamydia trachomatis serovar D (strain ATCC VR-885 / DSM 19411 / UW-3/Cx).